Here is a 187-residue protein sequence, read N- to C-terminus: UPF0232 protein MUL_0004 (187 aa).

Positions 1–12 are enriched in gly residues; the sequence is MNGDGEQPGPGD. Disordered regions lie at residues 1–77 and 166–187; these read MNGD…QPLG and ASPS…DTYG. Residues 14 to 30 are compositionally biased toward basic and acidic residues; that stretch reads AARDELPSMDLVRRTLA. Residues 31–55 show a composition bias toward low complexity; that stretch reads EARAAARARGQDPGRGFAAGPAPRR.

The protein belongs to the UPF0232 family.

This chain is UPF0232 protein MUL_0004, found in Mycobacterium ulcerans (strain Agy99).